A 462-amino-acid chain; its full sequence is Signal recognition particle protein (462 aa).

GTP-binding positions include 107-114, 190-194, and 248-251; these read GLQGAGKT, DTAGR, and TKVD.

It belongs to the GTP-binding SRP family. SRP54 subfamily. Part of the signal recognition particle protein translocation system, which is composed of SRP and FtsY. SRP is a ribonucleoprotein composed of Ffh and a 4.5S RNA molecule.

It is found in the cytoplasm. The catalysed reaction is GTP + H2O = GDP + phosphate + H(+). Its function is as follows. Involved in targeting and insertion of nascent membrane proteins into the cytoplasmic membrane. Binds to the hydrophobic signal sequence of the ribosome-nascent chain (RNC) as it emerges from the ribosomes. The SRP-RNC complex is then targeted to the cytoplasmic membrane where it interacts with the SRP receptor FtsY. Interaction with FtsY leads to the transfer of the RNC complex to the Sec translocase for insertion into the membrane, the hydrolysis of GTP by both Ffh and FtsY, and the dissociation of the SRP-FtsY complex into the individual components. The chain is Signal recognition particle protein from Haemophilus influenzae (strain ATCC 51907 / DSM 11121 / KW20 / Rd).